The sequence spans 339 residues: Transcription initiation factor IIB (339 aa).

A TFIIB-type zinc finger spans residues 39 to 70; that stretch reads EELICPVCGSKNIIKDYERAEIVCEMCGCVLQ. Zn(2+) contacts are provided by C43, C46, C62, and C65. 2 repeat units span residues 156-239 and 250-331.

This sequence belongs to the TFIIB family.

In terms of biological role, stabilizes TBP binding to an archaeal box-A promoter. Also responsible for recruiting RNA polymerase II to the pre-initiation complex (DNA-TBP-TFIIB). The sequence is that of Transcription initiation factor IIB from Methanococcus maripaludis (strain C7 / ATCC BAA-1331).